The chain runs to 310 residues: HPr kinase/phosphorylase (310 aa).

Catalysis depends on residues histidine 138 and lysine 159. 153-160 (GASGIGKS) contacts ATP. Mg(2+) is bound at residue serine 160. Aspartate 177 serves as the catalytic Proton acceptor; for phosphorylation activity. Proton donor; for dephosphorylation activity. An important for the catalytic mechanism of both phosphorylation and dephosphorylation region spans residues 201–210 (IEIRGVGIID). Glutamate 202 serves as a coordination point for Mg(2+). Arginine 243 is an active-site residue. The interval 264–269 (PVKTGR) is important for the catalytic mechanism of dephosphorylation.

This sequence belongs to the HPrK/P family. As to quaternary structure, homohexamer. Requires Mg(2+) as cofactor.

It catalyses the reaction [HPr protein]-L-serine + ATP = [HPr protein]-O-phospho-L-serine + ADP + H(+). The enzyme catalyses [HPr protein]-O-phospho-L-serine + phosphate + H(+) = [HPr protein]-L-serine + diphosphate. In terms of biological role, catalyzes the ATP- as well as the pyrophosphate-dependent phosphorylation of a specific serine residue in HPr, a phosphocarrier protein of the phosphoenolpyruvate-dependent sugar phosphotransferase system (PTS). HprK/P also catalyzes the pyrophosphate-producing, inorganic phosphate-dependent dephosphorylation (phosphorolysis) of seryl-phosphorylated HPr (P-Ser-HPr). The two antagonistic activities of HprK/P are regulated by several intracellular metabolites, which change their concentration in response to the absence or presence of rapidly metabolisable carbon sources (glucose, fructose, etc.) in the growth medium. Therefore, by controlling the phosphorylation state of HPr, HPrK/P is a sensor enzyme that plays a major role in the regulation of carbon metabolism and sugar transport: it mediates carbon catabolite repression (CCR), and regulates PTS-catalyzed carbohydrate uptake and inducer exclusion. In Lactococcus lactis subsp. cremoris (strain MG1363), this protein is HPr kinase/phosphorylase.